A 454-amino-acid chain; its full sequence is GA-binding protein alpha chain (454 aa).

Residues 168–251 (AALEGYRKEQ…SHLELLRKYV (84 aa)) form the PNT domain. Residues 295 to 316 (KVQRSPRISGEDRSSPGNRTGN) form a disordered region. Residue S303 is modified to Phosphoserine. The ETS DNA-binding region spans 320-400 (IQLWQFLLEL…QGKRFVYKFV (81 aa)).

The protein belongs to the ETS family. Heterotetramer of two alpha and two beta subunits. In terms of tissue distribution, ubiquitous.

The protein localises to the nucleus. Its function is as follows. Transcription factor capable of interacting with purine rich repeats (GA repeats). Positively regulates transcription of transcriptional repressor Rhit/Zpf13. The chain is GA-binding protein alpha chain (Gabpa) from Mus musculus (Mouse).